The primary structure comprises 423 residues: MLLKVRKSKASGNVRIPGSKSHTIRALFFASLAEGKSEIQSPLISDDALSAVEVCRALGAKIEKEDDKYVVEGFGGNPEVPEDVINVGNSGTTLRFGIMTAALGDGCSVFTGDRQIRQRPLGPLLCAINNLGAEAFSTRNNGRAPVVVKGKLKGGRTEIDSVTSQYLSSILINSPLIPLDTEVIVTRLNEVPYVDMTLWWLDKLGIKYENHDYKTFYIKGGQRYRPLNVTIPGDFSSATFFAVQAAISGEEFVLDNLDMTDPQGDKMVFSILEDMGAKVKVEGKSVRIKGCELVGREIDMNAIPDALPAMAVAGCFAKGETKLLNVPQARIKETDRIHVMCEQLKKMGADITELEDGLVIRESRLKGCKLEGYGDHRVVMSLAIAGLNAEGETVIDTAEAVNVTFPDFVNFLSRCGADISTCE.

Residues Lys20, Ser21, and Arg25 each contribute to the 3-phosphoshikimate site. Residue Lys20 participates in phosphoenolpyruvate binding. Residues Gly91 and Arg119 each contribute to the phosphoenolpyruvate site. 3-phosphoshikimate is bound by residues Thr163, Ser164, Gln165, Asp305, Gln328, and Lys332. Residue Gln165 coordinates phosphoenolpyruvate. Residue Asp305 is the Proton acceptor of the active site. Positions 336 and 377 each coordinate phosphoenolpyruvate.

This sequence belongs to the EPSP synthase family. Monomer.

The protein resides in the cytoplasm. The enzyme catalyses 3-phosphoshikimate + phosphoenolpyruvate = 5-O-(1-carboxyvinyl)-3-phosphoshikimate + phosphate. It participates in metabolic intermediate biosynthesis; chorismate biosynthesis; chorismate from D-erythrose 4-phosphate and phosphoenolpyruvate: step 6/7. Functionally, catalyzes the transfer of the enolpyruvyl moiety of phosphoenolpyruvate (PEP) to the 5-hydroxyl of shikimate-3-phosphate (S3P) to produce enolpyruvyl shikimate-3-phosphate and inorganic phosphate. This is 3-phosphoshikimate 1-carboxyvinyltransferase from Acetivibrio thermocellus (strain ATCC 27405 / DSM 1237 / JCM 9322 / NBRC 103400 / NCIMB 10682 / NRRL B-4536 / VPI 7372) (Clostridium thermocellum).